The following is a 479-amino-acid chain: Glycogen synthase (479 aa).

Position 15 (K15) interacts with ADP-alpha-D-glucose.

The protein belongs to the glycosyltransferase 1 family. Bacterial/plant glycogen synthase subfamily.

The catalysed reaction is [(1-&gt;4)-alpha-D-glucosyl](n) + ADP-alpha-D-glucose = [(1-&gt;4)-alpha-D-glucosyl](n+1) + ADP + H(+). Its pathway is glycan biosynthesis; glycogen biosynthesis. In terms of biological role, synthesizes alpha-1,4-glucan chains using ADP-glucose. In Clostridium beijerinckii (strain ATCC 51743 / NCIMB 8052) (Clostridium acetobutylicum), this protein is Glycogen synthase.